A 184-amino-acid polypeptide reads, in one-letter code: F(420)H(2) dehydrogenase subunit B (184 aa).

A disordered region spans residues 1–20; that stretch reads MGEVKETKTNNSKENPEEEV. The [4Fe-4S] cluster site is built by cysteine 61, cysteine 62, cysteine 126, and cysteine 156.

This sequence belongs to the complex I 20 kDa subunit family. In terms of assembly, the FPO complex is composed of at least 13 different subunits. FAD is required as a cofactor. Requires [4Fe-4S] cluster as cofactor.

The protein resides in the cell inner membrane. It catalyses the reaction methanophenazine + reduced coenzyme F420-(gamma-L-Glu)(n) = dihydromethanophenazine + oxidized coenzyme F420-(gamma-L-Glu)(n) + H(+). In terms of biological role, component of the F(420)H(2) dehydrogenase (FPO complex) which is part of the energy-conserving F(420)H(2):heterodisulfide oxidoreductase system. The membrane-bound electron transfer system of the complex plays an important role in the metabolism of methylotrophic methanogens when the organisms grow on methanol or methylamines. Catalyzes the oxidation of methanophenazine to dihydromethanophenazine. It shuttles electrons from F(420)H(2), via FAD and iron-sulfur (Fe-S) centers, to methanophenazine (an electron carrier in the membrane). It couples the redox reaction to proton translocation (for every two electrons transferred, two hydrogen ions are translocated across the cytoplasmic membrane), and thus conserves the redox energy in a proton gradient. It also catalyzes the oxidation of F(420)H(2) with quinones such as 2,3-dimethyl-1,4-naphthoquinone, 2-methyl-1,4-naphthoquinone and tetramethyl-p-benzoquinone. In Methanosarcina mazei (strain ATCC BAA-159 / DSM 3647 / Goe1 / Go1 / JCM 11833 / OCM 88) (Methanosarcina frisia), this protein is F(420)H(2) dehydrogenase subunit B (fpoB).